Consider the following 1577-residue polypeptide: Pentafunctional AROM polypeptide (1577 aa).

The tract at residues 1–384 (MSMKMADPTK…YEPKASVVSN (384 aa)) is 3-dehydroquinate synthase. Residues 48-50 (DTN), 85-88 (ENSK), 116-118 (GGV), and Asp-121 each bind NAD(+). Residue Arg-132 participates in 7-phospho-2-dehydro-3-deoxy-D-arabino-heptonate binding. 141 to 142 (TT) contacts NAD(+). Residues Asp-148 and Lys-154 each contribute to the 7-phospho-2-dehydro-3-deoxy-D-arabino-heptonate site. Position 163 (Lys-163) interacts with NAD(+). Asn-164 is a binding site for 7-phospho-2-dehydro-3-deoxy-D-arabino-heptonate. NAD(+) contacts are provided by residues 181 to 184 (FIDT) and Asn-192. Glu-196 provides a ligand contact to Zn(2+). Residues 196–199 (EVIK) and Lys-250 each bind 7-phospho-2-dehydro-3-deoxy-D-arabino-heptonate. Glu-260 functions as the Proton acceptor; for 3-dehydroquinate synthase activity in the catalytic mechanism. 7-phospho-2-dehydro-3-deoxy-D-arabino-heptonate contacts are provided by residues 264 to 268 (RNLLN) and His-271. Zn(2+) is bound at residue His-271. The active-site Proton acceptor; for 3-dehydroquinate synthase activity is His-275. Residues His-287 and Lys-356 each contribute to the 7-phospho-2-dehydro-3-deoxy-D-arabino-heptonate site. Residue His-287 coordinates Zn(2+). Positions 397–842 (VIPGVPKSLN…WDALKQKFGV (446 aa)) are EPSP synthase. Cys-824 functions as the For EPSP synthase activity in the catalytic mechanism. Residues 864 to 1056 (NASVIIIGMR…RKKRLSFFVS (193 aa)) are shikimate kinase. Residue 871–878 (GMRGAGKT) coordinates ATP. The tract at residues 1057–1277 (LTLPDLRDTG…AAPGQLSAAE (221 aa)) is 3-dehydroquinase. His-1180 (proton acceptor; for 3-dehydroquinate dehydratase activity) is an active-site residue. Lys-1208 serves as the catalytic Schiff-base intermediate with substrate; for 3-dehydroquinate dehydratase activity. The shikimate dehydrogenase stretch occupies residues 1290-1577 (AKKFAIFGKP…RNAVLGTNEK (288 aa)).

The protein in the N-terminal section; belongs to the sugar phosphate cyclases superfamily. Dehydroquinate synthase family. In the 2nd section; belongs to the EPSP synthase family. This sequence in the 3rd section; belongs to the shikimate kinase family. It in the 4th section; belongs to the type-I 3-dehydroquinase family. The protein in the C-terminal section; belongs to the shikimate dehydrogenase family. Homodimer. Zn(2+) is required as a cofactor.

Its subcellular location is the cytoplasm. It carries out the reaction 7-phospho-2-dehydro-3-deoxy-D-arabino-heptonate = 3-dehydroquinate + phosphate. The catalysed reaction is 3-dehydroquinate = 3-dehydroshikimate + H2O. The enzyme catalyses shikimate + NADP(+) = 3-dehydroshikimate + NADPH + H(+). It catalyses the reaction shikimate + ATP = 3-phosphoshikimate + ADP + H(+). It carries out the reaction 3-phosphoshikimate + phosphoenolpyruvate = 5-O-(1-carboxyvinyl)-3-phosphoshikimate + phosphate. Its pathway is metabolic intermediate biosynthesis; chorismate biosynthesis; chorismate from D-erythrose 4-phosphate and phosphoenolpyruvate: step 2/7. The protein operates within metabolic intermediate biosynthesis; chorismate biosynthesis; chorismate from D-erythrose 4-phosphate and phosphoenolpyruvate: step 3/7. It functions in the pathway metabolic intermediate biosynthesis; chorismate biosynthesis; chorismate from D-erythrose 4-phosphate and phosphoenolpyruvate: step 4/7. It participates in metabolic intermediate biosynthesis; chorismate biosynthesis; chorismate from D-erythrose 4-phosphate and phosphoenolpyruvate: step 5/7. Its pathway is metabolic intermediate biosynthesis; chorismate biosynthesis; chorismate from D-erythrose 4-phosphate and phosphoenolpyruvate: step 6/7. Functionally, the AROM polypeptide catalyzes 5 consecutive enzymatic reactions in prechorismate polyaromatic amino acid biosynthesis. In Talaromyces stipitatus (strain ATCC 10500 / CBS 375.48 / QM 6759 / NRRL 1006) (Penicillium stipitatum), this protein is Pentafunctional AROM polypeptide.